The sequence spans 291 residues: Tyrosine-protein kinase PtkA (291 aa).

The disordered stretch occupies residues 1–79 (MSSPRERRPA…RRASSPGESP (79 aa)). A compositionally biased stretch (polar residues) spans 23-60 (HQTSRSSPDTTAPTGSGLSNRFVNDNGIVTDTTASGTN). Phosphotyrosine is present on tyrosine 262.

It belongs to the HAD-like hydrolase superfamily. CbbY/CbbZ/Gph/YieH family. As to quaternary structure, interacts with PtpA. Autophosphorylated.

The catalysed reaction is L-tyrosyl-[protein] + ATP = O-phospho-L-tyrosyl-[protein] + ADP + H(+). Required for growth within macrophages. Catalyzes the phosphorylation of PtpA on the tyrosine residues at positions 128 and 129, thereby increasing PtpA phosphatase activity and promoting pathogenicity. This Mycobacterium bovis (strain ATCC BAA-935 / AF2122/97) protein is Tyrosine-protein kinase PtkA.